The chain runs to 717 residues: Probable E3 ubiquitin-protein ligase WAVH2 (717 aa).

2 stretches are compositionally biased toward polar residues: residues 13-28 (VSSN…SLHT) and 85-94 (RTTSNATPRT). The segment at 13 to 120 (VSSNQDKPQQ…SSSSSSSQGG (108 aa)) is disordered. Residues 95–117 (SNSSSPKFFSNPSSPKSSSSSSS) show a composition bias toward low complexity. Residues 140 to 184 (CAICLQRVNSNQSNSTAAIFTAECSHSFHLSCVNGLEDKRCPFCS) form an RING-type; atypical zinc finger. Residues 326–456 (DLVTVLDLSN…LNATRIPFVV (131 aa)) form the VWFA domain.

As to expression, expressed in root tips, cotyledons, leaf primordia and hypocotyls.

The enzyme catalyses S-ubiquitinyl-[E2 ubiquitin-conjugating enzyme]-L-cysteine + [acceptor protein]-L-lysine = [E2 ubiquitin-conjugating enzyme]-L-cysteine + N(6)-ubiquitinyl-[acceptor protein]-L-lysine.. In terms of biological role, probable E3 ubiquitin-protein ligase involved in the regulation of root growth. Acts as a positive regulator of root gravitropism. The sequence is that of Probable E3 ubiquitin-protein ligase WAVH2 from Arabidopsis thaliana (Mouse-ear cress).